A 356-amino-acid chain; its full sequence is Carminomycin 4-O-methyltransferase DnrK (356 aa).

Arg153 lines the S-adenosyl-L-methionine pocket. Asp163 contacts substrate. Residues Gly187, Glu210, 237-238 (DF), and Ser252 contribute to the S-adenosyl-L-methionine site. Positions 257 and 303 each coordinate substrate.

Belongs to the class I-like SAM-binding methyltransferase superfamily. Cation-independent O-methyltransferase family. As to quaternary structure, homodimer and homotetramer in equilibrium.

The catalysed reaction is carminomycin + S-adenosyl-L-methionine = daunorubicin + S-adenosyl-L-homocysteine + H(+). The protein operates within antibiotic biosynthesis; daunorubicin biosynthesis. It participates in antibiotic biosynthesis; carminomycin biosynthesis. In terms of biological role, involved in the biosynthesis of the anthracyclines carminomycin and daunorubicin (daunomycin) which are aromatic polyketide antibiotics that exhibit high cytotoxicity and are widely applied in the chemotherapy of a variety of cancers. In vivo, catalyzes the transfer of a methyl group from S-adenosyl-L-methionine to the 4-O-position of carminomycin to form daunorubicin. In vitro, it also methylates the anthracyclines rhodomycin D (10-carbomethoxy-13-deoxycarminomycin) and 13-deoxy-carminomycin at the 4-hydroxyl position. It is quite specific with respect to the length of the carbohydrate chain at the C7 position, but it can accept substrates with bulky substituent at C10 position. This chain is Carminomycin 4-O-methyltransferase DnrK (dnrK), found in Streptomyces peucetius.